Consider the following 121-residue polypeptide: Large ribosomal subunit protein bL19 (121 aa).

The protein belongs to the bacterial ribosomal protein bL19 family.

This protein is located at the 30S-50S ribosomal subunit interface and may play a role in the structure and function of the aminoacyl-tRNA binding site. This Chlamydia caviae (strain ATCC VR-813 / DSM 19441 / 03DC25 / GPIC) (Chlamydophila caviae) protein is Large ribosomal subunit protein bL19.